Here is a 436-residue protein sequence, read N- to C-terminus: MTQTAAPGRVQTLTKEQEKVLKQVWVHLFQFWGIDVDGSAVLTAKEPEPAAPSGKGRKLLGLFGKRKDATGAARKESNGKAAAKVYDAEKVEDSDAEKEKPTPQKVEGLEEMYELLKELDGAAVSKEFWSMLRCDYPDNLLLRFVRARKWDINKAMIMMAHSLRWRLNEGKPEDIVFGGERGAQKADKKGIVKQLELGKATVRGFDKNGCPIVYVRPRLHHAADQTEAETSEYSLLIIEQARLFLKEPCDTATILFDLSGFSMANMDYAPVKFLITCFEAHYPECLGKLFIHKAPWIFPPIWNIIKNWLDPVVAAKIAFTKTAADLEEFIPAEQIPLELGGKDEYNFDGFVMPDGSADTKLSDEKGKAAVLEEREAIIKRFIDATISWIESTSDEESAKWLEKKIDLSKELSENYSKLDPYIRSRSFYDVNGTLKV.

Residues 85–104 are disordered; that stretch reads VYDAEKVEDSDAEKEKPTPQ. The span at 86–102 shows a compositional bias: basic and acidic residues; it reads YDAEKVEDSDAEKEKPT. The CRAL-TRIO domain maps to 188–347; that stretch reads KKGIVKQLEL…ELGGKDEYNF (160 aa).

This sequence belongs to the PITP family. Binds phosphatidylinositol (PtdIns).

Its subcellular location is the cytoplasm. The protein localises to the endosome. Non-classical phosphatidylinositol (PtdIns) transfer protein (PITP), which exhibits PtdIns-binding/transfer activity in the absence of detectable PtdCho-binding/transfer activity. May also regulate post-Golgi membrane-trafficking events and have a role resistance to oxidative stress. This Eremothecium gossypii (strain ATCC 10895 / CBS 109.51 / FGSC 9923 / NRRL Y-1056) (Yeast) protein is Phosphatidylinositol transfer protein CSR1 (CSR1).